The primary structure comprises 154 residues: Myoglobin (154 aa).

The Globin domain maps to Gly2–Lys148. Ser4 is subject to Phosphoserine. Residue His65 participates in nitrite binding. Position 65 (His65) interacts with O2. The residue at position 68 (Thr68) is a Phosphothreonine. His94 serves as a coordination point for heme b.

This sequence belongs to the globin family. Monomeric.

It is found in the cytoplasm. It localises to the sarcoplasm. It catalyses the reaction Fe(III)-heme b-[protein] + nitric oxide + H2O = Fe(II)-heme b-[protein] + nitrite + 2 H(+). The catalysed reaction is H2O2 + AH2 = A + 2 H2O. Monomeric heme protein which primary function is to store oxygen and facilitate its diffusion within muscle tissues. Reversibly binds oxygen through a pentacoordinated heme iron and enables its timely and efficient release as needed during periods of heightened demand. Depending on the oxidative conditions of tissues and cells, and in addition to its ability to bind oxygen, it also has a nitrite reductase activity whereby it regulates the production of bioactive nitric oxide. Under stress conditions, like hypoxia and anoxia, it also protects cells against reactive oxygen species thanks to its pseudoperoxidase activity. This is Myoglobin (MB) from Cervus elaphus (Red deer).